A 228-amino-acid chain; its full sequence is Deoxyribose-phosphate aldolase (228 aa).

Catalysis depends on aspartate 96, which acts as the Proton donor/acceptor. Lysine 157 (schiff-base intermediate with acetaldehyde) is an active-site residue. Lysine 185 serves as the catalytic Proton donor/acceptor.

This sequence belongs to the DeoC/FbaB aldolase family. DeoC type 1 subfamily.

Its subcellular location is the cytoplasm. The catalysed reaction is 2-deoxy-D-ribose 5-phosphate = D-glyceraldehyde 3-phosphate + acetaldehyde. It functions in the pathway carbohydrate degradation; 2-deoxy-D-ribose 1-phosphate degradation; D-glyceraldehyde 3-phosphate and acetaldehyde from 2-deoxy-alpha-D-ribose 1-phosphate: step 2/2. Its function is as follows. Catalyzes a reversible aldol reaction between acetaldehyde and D-glyceraldehyde 3-phosphate to generate 2-deoxy-D-ribose 5-phosphate. The polypeptide is Deoxyribose-phosphate aldolase (Picosynechococcus sp. (strain ATCC 27264 / PCC 7002 / PR-6) (Agmenellum quadruplicatum)).